The chain runs to 762 residues: Palmitoyltransferase ZDHHC8 (762 aa).

Topologically, residues 1-13 (MPRSPGTRLKPAK) are cytoplasmic. A helical transmembrane segment spans residues 14-34 (YIPVATAAALLVGSSTLFFVF). Topologically, residues 35–52 (TCPWLTRAVSPAIPVYNG) are lumenal. A helical membrane pass occupies residues 53-73 (ILFLFVLANFSMATFMDPGVF). At 74–148 (PRADEDEDKE…NCIGRRNYRY (75 aa)) the chain is on the cytoplasmic side. The DHHC domain occupies 104 to 154 (KWCATCHFYRPPRCSHCSVCDNCVEDFDHHCPWVNNCIGRRNYRYFFLFLL). Cys134 serves as the catalytic S-palmitoyl cysteine intermediate. The helical transmembrane segment at 149–169 (FFLFLLSLSAHMVGVVAFGLL) threads the bilayer. Residues 170 to 190 (YVLNHSEGLGAAHTTITMAVM) are Lumenal-facing. The chain crosses the membrane as a helical span at residues 191–211 (CVAGLFFIPVIGLTGFHVVLV). The Cytoplasmic portion of the chain corresponds to 212-762 (TRGRTTNEQV…VGGTTYEISV (551 aa)). Disordered regions lie at residues 289–350 (GLKA…PPTP), 362–423 (GPKT…TTDA), 436–537 (ASRR…SPVR), and 551–574 (ERKD…GDSG). Ser335 bears the Phosphoserine mark. A compositionally biased stretch (pro residues) spans 408-417 (LRPPYPPSPP). Residue Arg439 is modified to Omega-N-methylarginine. The segment covering 471–485 (RNGSLSYDSLLNPGS) has biased composition (polar residues). Pro residues predominate over residues 511 to 521 (PSDPPRPPPRS). The span at 551-562 (ERKDREERERLL) shows a compositional bias: basic and acidic residues. A phosphoserine mark is found at Ser603 and Ser624. The span at 626 to 644 (SSLSSSMSRAPRTSSSSLQ) shows a compositional bias: low complexity. Disordered regions lie at residues 626–684 (SSLS…SYTG) and 707–744 (DHPQ…PARH). Phosphoserine is present on residues Ser672, Ser679, Ser722, and Ser740.

Belongs to the DHHC palmitoyltransferase family. ERF2/ZDHHC9 subfamily. As to expression, expressed in brain cortex and hippocampus.

The protein resides in the golgi apparatus membrane. It is found in the mitochondrion membrane. The enzyme catalyses L-cysteinyl-[protein] + hexadecanoyl-CoA = S-hexadecanoyl-L-cysteinyl-[protein] + CoA. Palmitoyltransferase that catalyzes the addition of palmitate onto various protein substrates and therefore functions in several unrelated biological processes. Through the palmitoylation of ABCA1 regulates the localization of the transporter to the plasma membrane and thereby regulates its function in cholesterol and phospholipid efflux. Could also pamitoylate the D(2) dopamine receptor DRD2 and regulate its stability and localization to the plasma membrane. Could also play a role in glutamatergic transmission. The protein is Palmitoyltransferase ZDHHC8 of Mus musculus (Mouse).